The primary structure comprises 211 residues: Histidine biosynthesis bifunctional protein HisIE (211 aa).

Residues 1 to 122 form a phosphoribosyl-AMP cyclohydrolase region; sequence MSFKAAEVSS…DAQEESQMVW (122 aa). The segment at 123–211 is phosphoribosyl-ATP pyrophosphohydrolase; it reads LHQLEQLLAA…VVNKLKERHK (89 aa).

This sequence in the N-terminal section; belongs to the PRA-CH family. It in the C-terminal section; belongs to the PRA-PH family.

The protein resides in the cytoplasm. The enzyme catalyses 1-(5-phospho-beta-D-ribosyl)-ATP + H2O = 1-(5-phospho-beta-D-ribosyl)-5'-AMP + diphosphate + H(+). It carries out the reaction 1-(5-phospho-beta-D-ribosyl)-5'-AMP + H2O = 1-(5-phospho-beta-D-ribosyl)-5-[(5-phospho-beta-D-ribosylamino)methylideneamino]imidazole-4-carboxamide. Its pathway is amino-acid biosynthesis; L-histidine biosynthesis; L-histidine from 5-phospho-alpha-D-ribose 1-diphosphate: step 2/9. It functions in the pathway amino-acid biosynthesis; L-histidine biosynthesis; L-histidine from 5-phospho-alpha-D-ribose 1-diphosphate: step 3/9. This is Histidine biosynthesis bifunctional protein HisIE from Vibrio parahaemolyticus serotype O3:K6 (strain RIMD 2210633).